The primary structure comprises 192 residues: Transcription termination/antitermination protein NusG (192 aa).

Positions 140–168 (VGEVVTVTDGPFETFMGTVEEIDKERNRL) constitute a KOW domain.

It belongs to the NusG family.

Its function is as follows. Participates in transcription elongation, termination and antitermination. The chain is Transcription termination/antitermination protein NusG from Rickettsia typhi (strain ATCC VR-144 / Wilmington).